The following is a 253-amino-acid chain: uncharacterized protein (253 aa).

This is an uncharacterized protein from Mycoplasma pneumoniae (strain ATCC 29342 / M129 / Subtype 1) (Mycoplasmoides pneumoniae).